Consider the following 741-residue polypeptide: Probable basic-leucine zipper transcription factor I (741 aa).

A coiled-coil region spans residues 77–117 (QIIEQIQFLQQQQQQQHDQIQQQLHNFQQQYQQQYQQRQQQ). 4 stretches are compositionally biased toward low complexity: residues 153–164 (QQPPQSLQQQQQ), 172–237 (PQQQ…QIQK), 277–290 (IQQQ…IQQK), and 381–390 (QQQQQQQQQQ). Disordered stretches follow at residues 153 to 237 (QQPP…QIQK), 277 to 305 (IQQQ…SNSM), and 349 to 390 (KQKE…QQQQ). Residues 429–492 (ESKKSIKRIN…HEGGTMAILK (64 aa)) form the bZIP domain. The interval 431 to 432 (KK) is basic motif. The interval 434-441 (IKRINQNI) is leucine-zipper.

The protein belongs to the bZIP family.

Its subcellular location is the nucleus. Its function is as follows. Probable transcriptional regulator. The chain is Probable basic-leucine zipper transcription factor I (bzpI) from Dictyostelium discoideum (Social amoeba).